Here is a 184-residue protein sequence, read N- to C-terminus: Muscle-specific protein 20 (184 aa).

Positions 17–122 constitute a Calponin-homology (CH) domain; sequence PEMDKEAQEW…NTIFALGRAT (106 aa). Residues 157–181 form a Calponin-like repeat; the sequence is VGLQAGSNKGATQAGQNLGAGRKIL.

The protein belongs to the calponin family. In terms of tissue distribution, found in synchronous muscle; not found in asynchronous indirect flight muscle.

In Drosophila melanogaster (Fruit fly), this protein is Muscle-specific protein 20 (Mp20).